The primary structure comprises 438 residues: Histidine--tRNA ligase (438 aa).

Belongs to the class-II aminoacyl-tRNA synthetase family. Homodimer.

It localises to the cytoplasm. It catalyses the reaction tRNA(His) + L-histidine + ATP = L-histidyl-tRNA(His) + AMP + diphosphate + H(+). This chain is Histidine--tRNA ligase, found in Blochmanniella pennsylvanica (strain BPEN).